Here is a 623-residue protein sequence, read N- to C-terminus: Alpha-1,2-mannosyltransferase Alg9 (623 aa).

8 consecutive transmembrane segments (helical) span residues Leu152 to Met172, Leu193 to Trp223, Phe229 to Leu254, Phe266 to Ile284, Phe326 to Leu348, Phe360 to Ala378, Ile390 to Phe410, and Phe431 to Tyr452.

Belongs to the glycosyltransferase 22 family.

Its subcellular location is the endoplasmic reticulum membrane. It carries out the reaction an alpha-D-Man-(1-&gt;2)-alpha-D-Man-(1-&gt;2)-alpha-D-Man-(1-&gt;3)-[alpha-D-Man-(1-&gt;3)-alpha-D-Man-(1-&gt;6)]-beta-D-Man-(1-&gt;4)-beta-D-GlcNAc-(1-&gt;4)-alpha-D-GlcNAc-diphospho-di-trans,poly-cis-dolichol + a di-trans,poly-cis-dolichyl beta-D-mannosyl phosphate = an alpha-D-Man-(1-&gt;2)-alpha-D-Man-(1-&gt;2)-alpha-D-Man-(1-&gt;3)-[alpha-D-Man-(1-&gt;2)-alpha-D-Man-(1-&gt;3)-alpha-D-Man-(1-&gt;6)]-beta-D-Man-(1-&gt;4)-beta-D-GlcNAc-(1-&gt;4)-alpha-D-GlcNAc-diphospho-di-trans,poly-cis-dolichol + a di-trans,poly-cis-dolichyl phosphate + H(+). The catalysed reaction is an alpha-D-Man-(1-&gt;2)-alpha-D-Man-(1-&gt;2)-alpha-D-Man-(1-&gt;3)-[alpha-D-Man-(1-&gt;2)-alpha-D-Man-(1-&gt;3)-[alpha-D-Man-(1-&gt;6)]-alpha-D-Man-(1-&gt;6)]-beta-D-Man-(1-&gt;4)-beta-D-GlcNAc-(1-&gt;4)-alpha-D-GlcNAc-diphospho-di-trans,poly-cis-dolichol + a di-trans,poly-cis-dolichyl beta-D-mannosyl phosphate = an alpha-D-Man-(1-&gt;2)-alpha-D-Man-(1-&gt;2)-alpha-D-Man-(1-&gt;3)-[alpha-D-Man-(1-&gt;2)-alpha-D-Man-(1-&gt;3)-[alpha-D-Man-(1-&gt;2)-alpha-D-Man-(1-&gt;6)]-alpha-D-Man-(1-&gt;6)]-beta-D-Man-(1-&gt;4)-beta-D-GlcNAc-(1-&gt;4)-alpha-D-GlcNAc-diphospho-di-trans,poly-cis-dolichol + a di-trans,poly-cis-dolichyl phosphate + H(+). It functions in the pathway protein modification; protein glycosylation. Functionally, probable alpha-1,2-mannosyltransferase involved in the N-glycosylation pathway. Probably involved in glycosylation of the TNF receptor grnd, regulating its ligand affinity. Required for normal epithelial growth and architecture. Suppressor of JNK-dependent intestinal stem cell proliferation. The polypeptide is Alpha-1,2-mannosyltransferase Alg9 (Drosophila melanogaster (Fruit fly)).